The following is a 52-amino-acid chain: Light-harvesting protein B-880 alpha chain (52 aa).

Residues 1–12 are Cytoplasmic-facing; it reads MWKVWLLFDPRR. The chain crosses the membrane as a helical span at residues 13 to 33; it reads TLVALFTFLFVLALLIHFILL. H29 serves as a coordination point for a bacteriochlorophyll. Residues 34–52 are Periplasmic-facing; sequence STDRFNWMQGAPTAPAQTS.

Belongs to the antenna complex alpha subunit family. As to quaternary structure, the core complex is formed by different alpha and beta chains, binding bacteriochlorophyll molecules, and arranged most probably in tetrameric structures disposed around the reaction center. The non-pigmented gamma chains may constitute additional components.

Its subcellular location is the cell inner membrane. In terms of biological role, antenna complexes are light-harvesting systems, which transfer the excitation energy to the reaction centers. The chain is Light-harvesting protein B-880 alpha chain from Afifella marina (Rhodobium marinum).